Consider the following 254-residue polypeptide: Imidazole glycerol phosphate synthase subunit HisF (254 aa).

Catalysis depends on residues Asp11 and Asp130.

The protein belongs to the HisA/HisF family. As to quaternary structure, heterodimer of HisH and HisF.

Its subcellular location is the cytoplasm. It catalyses the reaction 5-[(5-phospho-1-deoxy-D-ribulos-1-ylimino)methylamino]-1-(5-phospho-beta-D-ribosyl)imidazole-4-carboxamide + L-glutamine = D-erythro-1-(imidazol-4-yl)glycerol 3-phosphate + 5-amino-1-(5-phospho-beta-D-ribosyl)imidazole-4-carboxamide + L-glutamate + H(+). Its pathway is amino-acid biosynthesis; L-histidine biosynthesis; L-histidine from 5-phospho-alpha-D-ribose 1-diphosphate: step 5/9. Functionally, IGPS catalyzes the conversion of PRFAR and glutamine to IGP, AICAR and glutamate. The HisF subunit catalyzes the cyclization activity that produces IGP and AICAR from PRFAR using the ammonia provided by the HisH subunit. The chain is Imidazole glycerol phosphate synthase subunit HisF from Solibacter usitatus (strain Ellin6076).